The primary structure comprises 115 residues: Parathyroid hormone (115 aa).

A signal peptide spans 1–25; that stretch reads MMSANTVAKVMIIMLAVCLLTQTDG. Residues 26–31 constitute a propeptide that is removed on maturation; sequence KPVRKR. Residues 51 to 69 form an important for receptor binding region; it reads RMQWLRRKLQDMHNFVSLG.

It belongs to the parathyroid hormone family. In terms of assembly, interacts with PTH1R (via N-terminal extracellular domain). In terms of tissue distribution, highly expressed in the parathyroid gland. Also expressed in the placenta, thymus and testis.

It is found in the secreted. Its function is as follows. Parathyroid hormone elevates calcium level by dissolving the salts in bone and preventing their renal excretion. Acts by binding to its receptor, PTH1R, activating G protein-coupled receptor signaling. Stimulates [1-14C]-2-deoxy-D-glucose (2DG) transport and glycogen synthesis in osteoblastic cells. This chain is Parathyroid hormone, found in Mus musculus (Mouse).